The sequence spans 97 residues: Co-chaperonin GroES (97 aa).

The protein belongs to the GroES chaperonin family. As to quaternary structure, heptamer of 7 subunits arranged in a ring. Interacts with the chaperonin GroEL.

The protein localises to the cytoplasm. Functionally, together with the chaperonin GroEL, plays an essential role in assisting protein folding. The GroEL-GroES system forms a nano-cage that allows encapsulation of the non-native substrate proteins and provides a physical environment optimized to promote and accelerate protein folding. GroES binds to the apical surface of the GroEL ring, thereby capping the opening of the GroEL channel. The protein is Co-chaperonin GroES of Serratia proteamaculans (strain 568).